The following is a 74-amino-acid chain: UPF0270 protein NT01EI_3666 (74 aa).

It belongs to the UPF0270 family.

The sequence is that of UPF0270 protein NT01EI_3666 from Edwardsiella ictaluri (strain 93-146).